The following is a 150-amino-acid chain: Transcription antitermination protein NusB (150 aa).

Belongs to the NusB family.

Functionally, involved in transcription antitermination. Required for transcription of ribosomal RNA (rRNA) genes. Binds specifically to the boxA antiterminator sequence of the ribosomal RNA (rrn) operons. The protein is Transcription antitermination protein NusB of Streptococcus equi subsp. zooepidemicus (strain H70).